Reading from the N-terminus, the 460-residue chain is ATP synthase subunit beta (460 aa).

150 to 157 (GGAGVGKT) provides a ligand contact to ATP.

Belongs to the ATPase alpha/beta chains family. In terms of assembly, F-type ATPases have 2 components, CF(1) - the catalytic core - and CF(0) - the membrane proton channel. CF(1) has five subunits: alpha(3), beta(3), gamma(1), delta(1), epsilon(1). CF(0) has three main subunits: a(1), b(2) and c(9-12). The alpha and beta chains form an alternating ring which encloses part of the gamma chain. CF(1) is attached to CF(0) by a central stalk formed by the gamma and epsilon chains, while a peripheral stalk is formed by the delta and b chains.

It is found in the cell inner membrane. The catalysed reaction is ATP + H2O + 4 H(+)(in) = ADP + phosphate + 5 H(+)(out). In terms of biological role, produces ATP from ADP in the presence of a proton gradient across the membrane. The catalytic sites are hosted primarily by the beta subunits. In Klebsiella pneumoniae subsp. pneumoniae (strain ATCC 700721 / MGH 78578), this protein is ATP synthase subunit beta.